The sequence spans 30 residues: Kappa-sparatoxin-Hv1d (30 aa).

Disulfide bonds link cysteine 3-cysteine 17, cysteine 10-cysteine 22, and cysteine 16-cysteine 26.

Expressed by the venom gland.

Its subcellular location is the secreted. In terms of biological role, inhibitor of voltage-gated potassium channels of the Kv4/KCND family. Blocks calcium channels (Cav). The chain is Kappa-sparatoxin-Hv1d from Heteropoda venatoria (Brown huntsman spider).